The primary structure comprises 465 residues: Glutamate--tRNA ligase (465 aa).

Positions 11–21 match the 'HIGH' region motif; the sequence is PSPTGFIHLGN. The tract at residues 118–139 is disordered; it reads GEKPRYDGTWRPAPGKILPPPP. Positions 243–247 match the 'KMSKS' region motif; it reads KMSKR. Lys246 lines the ATP pocket.

It belongs to the class-I aminoacyl-tRNA synthetase family. Glutamate--tRNA ligase type 1 subfamily. Monomer.

It is found in the cytoplasm. It catalyses the reaction tRNA(Glu) + L-glutamate + ATP = L-glutamyl-tRNA(Glu) + AMP + diphosphate. In terms of biological role, catalyzes the attachment of glutamate to tRNA(Glu) in a two-step reaction: glutamate is first activated by ATP to form Glu-AMP and then transferred to the acceptor end of tRNA(Glu). The chain is Glutamate--tRNA ligase from Ralstonia pickettii (strain 12J).